We begin with the raw amino-acid sequence, 299 residues long: Acetylglutamate kinase (299 aa).

Substrate is bound by residues 62-63 (GG), R84, and N188.

The protein belongs to the acetylglutamate kinase family. ArgB subfamily.

The protein localises to the cytoplasm. It carries out the reaction N-acetyl-L-glutamate + ATP = N-acetyl-L-glutamyl 5-phosphate + ADP. Its pathway is amino-acid biosynthesis; L-arginine biosynthesis; N(2)-acetyl-L-ornithine from L-glutamate: step 2/4. Catalyzes the ATP-dependent phosphorylation of N-acetyl-L-glutamate. In Methanosarcina acetivorans (strain ATCC 35395 / DSM 2834 / JCM 12185 / C2A), this protein is Acetylglutamate kinase.